The chain runs to 101 residues: Urease subunit beta (101 aa).

The protein belongs to the urease beta subunit family. In terms of assembly, heterotrimer of UreA (gamma), UreB (beta) and UreC (alpha) subunits. Three heterotrimers associate to form the active enzyme.

The protein localises to the cytoplasm. The enzyme catalyses urea + 2 H2O + H(+) = hydrogencarbonate + 2 NH4(+). The protein operates within nitrogen metabolism; urea degradation; CO(2) and NH(3) from urea (urease route): step 1/1. In Pseudomonas fluorescens (strain SBW25), this protein is Urease subunit beta.